Reading from the N-terminus, the 98-residue chain is NADH-ubiquinone oxidoreductase chain 4L (98 aa).

3 helical membrane-spanning segments follow: residues 1-21, 28-48, and 59-79; these read MTSI…GVLI, STLL…ALLI, and APII…ALLV.

Belongs to the complex I subunit 4L family. In terms of assembly, core subunit of respiratory chain NADH dehydrogenase (Complex I) which is composed of 45 different subunits.

It is found in the mitochondrion inner membrane. It carries out the reaction a ubiquinone + NADH + 5 H(+)(in) = a ubiquinol + NAD(+) + 4 H(+)(out). Core subunit of the mitochondrial membrane respiratory chain NADH dehydrogenase (Complex I) which catalyzes electron transfer from NADH through the respiratory chain, using ubiquinone as an electron acceptor. Part of the enzyme membrane arm which is embedded in the lipid bilayer and involved in proton translocation. This is NADH-ubiquinone oxidoreductase chain 4L (MT-ND4L) from Trichosurus vulpecula (Brush-tailed possum).